We begin with the raw amino-acid sequence, 487 residues long: Proline--tRNA ligase (487 aa).

Belongs to the class-II aminoacyl-tRNA synthetase family. ProS type 3 subfamily. In terms of assembly, homodimer.

It localises to the cytoplasm. The enzyme catalyses tRNA(Pro) + L-proline + ATP = L-prolyl-tRNA(Pro) + AMP + diphosphate. In terms of biological role, catalyzes the attachment of proline to tRNA(Pro) in a two-step reaction: proline is first activated by ATP to form Pro-AMP and then transferred to the acceptor end of tRNA(Pro). This Pyrobaculum neutrophilum (strain DSM 2338 / JCM 9278 / NBRC 100436 / V24Sta) (Thermoproteus neutrophilus) protein is Proline--tRNA ligase.